We begin with the raw amino-acid sequence, 202 residues long: MSERIASVERTTSETHISCTIDLDHIPGVTEQKINVSTGIGFLDHMFTALAKHGGMSLQLQCKGDLHIDDHHTAEDCALALGEAFKKALGERKGIKRYGYAYAPLDESLSRAVIDISSRPYFMCHLPFTREKVGDLSTEMVSHLLQSFAFAAGVTLHIDSIRGENNHHIAESAFKALALAIRMAISRTGGDDVPSTKGVLAL.

This sequence belongs to the imidazoleglycerol-phosphate dehydratase family. In terms of assembly, homotrimer.

The catalysed reaction is D-erythro-1-(imidazol-4-yl)glycerol 3-phosphate = 3-(imidazol-4-yl)-2-oxopropyl phosphate + H2O. It participates in amino-acid biosynthesis; L-histidine biosynthesis; L-histidine from 5-phospho-alpha-D-ribose 1-diphosphate: step 6/9. The polypeptide is Imidazoleglycerol-phosphate dehydratase (HIS3) (Cryptococcus neoformans var. neoformans serotype D (strain B-3501A) (Filobasidiella neoformans)).